Consider the following 562-residue polypeptide: Transcriptional adapter 2A (562 aa).

The ZZ-type zinc-finger motif lies at 91–146; that stretch reads KDANRCATCRCSLTEPYIKCSECLDTLLCLQCFSRGKEAFSHRNNHAYIIVRDNIQ. Zn(2+) contacts are provided by cysteine 96, cysteine 99, cysteine 110, cysteine 113, cysteine 119, cysteine 122, histidine 132, and histidine 136. An SANT domain is found at 154 to 198; the sequence is WTARDERILLKTLRTHGYGNWEAVSQALDQRHEPAEVRRHYHDCY. The SWIRM domain maps to 471-562; it reads CLTPTEYNFS…GHISRPPSYG (92 aa).

In terms of assembly, component of the Ada2a-containing (ATAC) complex composed of at least Ada2a, Atac1, Hcf, Ada3, Gcn5, Mocs2B, Charac-14, Atac3, Atac2, NC2beta and wds. Component of a complex that does not include Gcn5 or Ada3.

It is found in the nucleus. It localises to the chromosome. Component of the histone acetyltransferase (HAT) complex ATAC; predominantly involved in acetylation of histone H4, including at Lys-6 (H4K5ac) and Lys-13 (H4K12ac). May be part of several different complexes, including Gcn5-independent complexes involved in RNA polymerase II-dependent transcription. The chain is Transcriptional adapter 2A from Drosophila melanogaster (Fruit fly).